The chain runs to 117 residues: Cysteine rich necrotrophic effector Tox1 (117 aa).

The signal sequence occupies residues 1 to 17; that stretch reads MKLTMVLSVAFATLTFA. 8 disulfides stabilise this stretch: Cys-36–Cys-87, Cys-44–Cys-55, Cys-53–Cys-58, Cys-54–Cys-98, Cys-63–Cys-83, Cys-67–Cys-117, Cys-86–Cys-97, and Cys-107–Cys-110. Positions 87–117 are chitin-binding domain; it reads CNAGGESHELCCSIASAGIDCNPCTAGLRMC.

As to quaternary structure, interacts with host cell wall-associated kinase receptor Snn1.

The protein localises to the secreted. Its function is as follows. Necrotrophic effector that plays a critical role during fungal penetration, via its interaction with the host Snn1 protein. Snn1 is a member of the wall-associated kinase class of receptors, which are known to drive pathways for biotrophic pathogen resistance. Recognition of Tox1 by Snn1 induces mitogen-activated protein kinase genes such as MAPK3 and activates programmed cell death, which allows this necrotroph to gain nutrients and sporulate. Recognition of Tox1 by Snn1 also induces other plant defense responses, including oxidative burst and pathogenesis related (PR) gene expression. The development of necrosis and disease induced by Tox1, and particularly penetration during infection, requires light, which is probably related to the light-dependent expression of host Snn1. Tox1 plays an additional role in providing significant protection from wheat chitinases by binding chitin in the fungal cell wall. The protein is Cysteine rich necrotrophic effector Tox1 of Phaeosphaeria nodorum (strain SN15 / ATCC MYA-4574 / FGSC 10173) (Glume blotch fungus).